Here is a 55-residue protein sequence, read N- to C-terminus: Accessory gland-specific peptide 70A (55 aa).

The first 19 residues, 1 to 19, serve as a signal peptide directing secretion; it reads MKTLSVFLVLVCLLGLVQS. Hydroxyproline is present on residues proline 28, proline 32, proline 34, and proline 38. An intrachain disulfide couples cysteine 43 to cysteine 55.

Main cells of the accessory glands of males (paragonial gland).

Its subcellular location is the secreted. Its function is as follows. Represses female sexual receptivity and stimulates oviposition. This chain is Accessory gland-specific peptide 70A (Acp70A), found in Drosophila sechellia (Fruit fly).